The sequence spans 356 residues: Holliday junction branch migration complex subunit RuvB (356 aa).

The large ATPase domain (RuvB-L) stretch occupies residues 4-191; it reads TDKLATEQRI…FGIVARLEFY (188 aa). ATP-binding positions include L30, R31, G72, K75, T76, T77, 138–140, R181, Y191, and R228; that span reads EDY. Mg(2+) is bound at residue T76. Residues 192-262 are small ATPAse domain (RuvB-S); it reads DAEQLSRIVR…VADAALAMLD (71 aa). The head domain (RuvB-H) stretch occupies residues 265–356; it reads PVGFDLMDRK…RGEWDTPDGK (92 aa). R301, R320, and R325 together coordinate DNA.

It belongs to the RuvB family. As to quaternary structure, homohexamer. Forms an RuvA(8)-RuvB(12)-Holliday junction (HJ) complex. HJ DNA is sandwiched between 2 RuvA tetramers; dsDNA enters through RuvA and exits via RuvB. An RuvB hexamer assembles on each DNA strand where it exits the tetramer. Each RuvB hexamer is contacted by two RuvA subunits (via domain III) on 2 adjacent RuvB subunits; this complex drives branch migration. In the full resolvosome a probable DNA-RuvA(4)-RuvB(12)-RuvC(2) complex forms which resolves the HJ.

The protein resides in the cytoplasm. The catalysed reaction is ATP + H2O = ADP + phosphate + H(+). The RuvA-RuvB-RuvC complex processes Holliday junction (HJ) DNA during genetic recombination and DNA repair, while the RuvA-RuvB complex plays an important role in the rescue of blocked DNA replication forks via replication fork reversal (RFR). RuvA specifically binds to HJ cruciform DNA, conferring on it an open structure. The RuvB hexamer acts as an ATP-dependent pump, pulling dsDNA into and through the RuvAB complex. RuvB forms 2 homohexamers on either side of HJ DNA bound by 1 or 2 RuvA tetramers; 4 subunits per hexamer contact DNA at a time. Coordinated motions by a converter formed by DNA-disengaged RuvB subunits stimulates ATP hydrolysis and nucleotide exchange. Immobilization of the converter enables RuvB to convert the ATP-contained energy into a lever motion, pulling 2 nucleotides of DNA out of the RuvA tetramer per ATP hydrolyzed, thus driving DNA branch migration. The RuvB motors rotate together with the DNA substrate, which together with the progressing nucleotide cycle form the mechanistic basis for DNA recombination by continuous HJ branch migration. Branch migration allows RuvC to scan DNA until it finds its consensus sequence, where it cleaves and resolves cruciform DNA. In Burkholderia lata (strain ATCC 17760 / DSM 23089 / LMG 22485 / NCIMB 9086 / R18194 / 383), this protein is Holliday junction branch migration complex subunit RuvB.